The chain runs to 149 residues: Large ribosomal subunit protein bL9 (149 aa).

It belongs to the bacterial ribosomal protein bL9 family.

Its function is as follows. Binds to the 23S rRNA. The sequence is that of Large ribosomal subunit protein bL9 (rplI) from Geobacillus stearothermophilus (Bacillus stearothermophilus).